The following is a 514-amino-acid chain: MDRRKKPLDVAASSLVDLKAELFRKQEEFKKEKLLKDAGIFAKPKPSNKKPSIWTKQNTGVAKRAEKDIEQKAEEDQTLDQSRKKLEEKAKLYEKMTKGDFPDEETEDLYLVDFTQKIIDKQREVQELYQNEAAIKTLEKETDDEEIEPEMEIPPPEDPDEEWVDYVDSLGRSRRCMKKDLPSILKMDQELQGKRLDPDGNTLLSEDMKRELQRQQWEKEEEEALRKPMGPIHYEDIRENEARQLGVGYFAFSRDQDLRHKQRATLDMLREQTLDQRTKREQLKEKRKAALESRLSKLRARKVKKLREEGLEEEAERLENGEVKDTTSPVEAEPEVPRPSRKVEVVIQERRDTKPGVPYVREWDKGKELMFGQWSKKQEELRDERDPEFAPPSDYFMGQKKDDGYSSQNLNSPETSPGKTEPEISENQKKLSVQASTHRAEVVPPSVQAYSNNVQGGLAPAEASGSDAEDGSTSAETDSSDEQDGVPSAHPLHLWCSDTCQPSNAGLWLWPLRI.

Disordered stretches follow at residues 42-83 (AKPK…DQSR) and 137-162 (TLEK…PDEE). Over residues 63-83 (KRAEKDIEQKAEEDQTLDQSR) the composition is skewed to basic and acidic residues. Residues 66 to 98 (EKDIEQKAEEDQTLDQSRKKLEEKAKLYEKMTK) adopt a coiled-coil conformation. Positions 141 to 162 (ETDDEEIEPEMEIPPPEDPDEE) are enriched in acidic residues. Coiled-coil stretches lie at residues 203–227 (LLSE…ALRK) and 266–321 (LDML…LENG). Disordered regions lie at residues 270-291 (REQT…KAAL) and 306-490 (LREE…PSAH). Composition is skewed to basic and acidic residues over residues 335–354 (EVPR…RDTK) and 376–388 (KKQE…RDPE). Over residues 405 to 418 (YSSQNLNSPETSPG) the composition is skewed to polar residues. The segment covering 420-429 (TEPEISENQK) has biased composition (basic and acidic residues).

It is found in the nucleus. In terms of biological role, probably involved in neuronal development. This Gallus gallus (Chicken) protein is Coiled-coil domain-containing protein 174 (CCDC174).